The following is a 1520-amino-acid chain: Integrator complex subunit 3 homolog (1520 aa).

Disordered regions lie at residues 1 to 23 (MMNQQQQQQQPPTTSPTQQQQLT), 523 to 671 (QLHS…NSRV), 689 to 801 (VISQ…SPST), 813 to 922 (DEPP…QNIK), 1116 to 1177 (FSNS…NITN), and 1489 to 1520 (QSSNIKNDNNPTLSKHQNSDDDSNPKKRFRKE). Composition is skewed to low complexity over residues 527-549 (QQQQLQQQQLQQPQQPQQQQQPP) and 557-595 (QPINKQLPLQMSPQQQSQQQLQQQQLQQQLQQQQQQQQP). Positions 596–612 (PQQPPPQQQPQQQPPQQ) are enriched in pro residues. The span at 613–625 (QPQQQPQQQQPQL) shows a compositional bias: low complexity. A compositionally biased stretch (polar residues) spans 626 to 639 (NISTGNLPNIQQPM). 3 stretches are compositionally biased toward low complexity: residues 642–669 (SPPLSSNTLVSPTSSSSPTSSNLPTNNS), 694–717 (PQSQQTPSLHSSSQSVLQQKSPPL), and 725–735 (QQQPSQQLPSQ). The span at 736–752 (IVKNSPPNLSMTNENIS) shows a compositional bias: polar residues. Low complexity predominate over residues 768–789 (SPLINSSNSNITTPNPDSQSQI). Residues 819-828 (SKSSPTQSNI) show a composition bias toward polar residues. Low complexity predominate over residues 837–882 (PPQTTISSSSPLLQPQTQPQPQTQPQPQTLQQSTTPSLSSSSTPTI). Residues 898–918 (QPPPPPPSSQPLQPPPPPPPS) are compositionally biased toward pro residues. 2 stretches are compositionally biased toward low complexity: residues 1116-1130 (FSNSDDNESTNNNNN) and 1137-1177 (QQQQ…NITN). Over residues 1489 to 1504 (QSSNIKNDNNPTLSKH) the composition is skewed to polar residues.

The protein belongs to the Integrator subunit 3 family. As to quaternary structure, component of the Integrator complex. The core complex associates with protein phosphatase 2A subunits, to form the Integrator-PP2A (INTAC) complex. Component of the SOSS complex.

It is found in the nucleus. Its subcellular location is the cytoplasm. Component of the integrator complex, a multiprotein complex that terminates RNA polymerase II (Pol II) transcription in the promoter-proximal region of genes. The integrator complex provides a quality checkpoint during transcription elongation by driving premature transcription termination of transcripts that are unfavorably configured for transcriptional elongation: the complex terminates transcription by (1) catalyzing dephosphorylation of the C-terminal domain (CTD) of Pol II subunit polr2a, (2) degrading the exiting nascent RNA transcript via endonuclease activity and (3) promoting the release of Pol II from bound DNA. The integrator complex is also involved in terminating the synthesis of non-coding Pol II transcripts, such as enhancer RNAs (eRNAs), small nuclear RNAs (snRNAs), telomerase RNAs and long non-coding RNAs (lncRNAs). In terms of biological role, component of the SOSS complex, a multiprotein complex that functions downstream of the MRN complex to promote DNA repair and G2/M checkpoint. The SOSS complex associates with single-stranded DNA at DNA lesions and influences diverse endpoints in the cellular DNA damage response including cell-cycle checkpoint activation, recombinational repair and maintenance of genomic stability. The SOSS complex is required for efficient homologous recombination-dependent repair of double-strand breaks (DSBs) and ATM-dependent signaling pathways. In the SOSS complex, it is required for the assembly of the complex and for stabilization of the complex at DNA damage sites. This is Integrator complex subunit 3 homolog (ints3) from Dictyostelium discoideum (Social amoeba).